Here is an 83-residue protein sequence, read N- to C-terminus: Small ribosomal subunit protein bS16 (83 aa).

Belongs to the bacterial ribosomal protein bS16 family.

The polypeptide is Small ribosomal subunit protein bS16 (Shewanella halifaxensis (strain HAW-EB4)).